Reading from the N-terminus, the 496-residue chain is Apolipoprotein N-acyltransferase (496 aa).

A run of 6 helical transmembrane segments spans residues 6–26 (IICFLLGILSGLVFAPTFFIP), 50–70 (FGYLFGFGHFLSGMYWISIGV), 77–97 (FWWAIPFALFGLPIILAFFIS), 114–134 (LIFCLLWVLFEWIRSWICTGL), 148–168 (ILIQPLSITGIYGLSFIVIYI), and 183–203 (LKILLASSMLILTVMVIYGAM). In terms of domain architecture, CN hydrolase spans 220–464 (VQPSIPQTAK…QGLIPQKLTT (245 aa)). Glutamate 259 functions as the Proton acceptor in the catalytic mechanism. Lysine 322 is a catalytic residue. The active-site Nucleophile is the cysteine 372. The helical transmembrane segment at 474 to 494 (FAMLLPIVFILLIHYLLSLIF) threads the bilayer.

The protein belongs to the CN hydrolase family. Apolipoprotein N-acyltransferase subfamily.

Its subcellular location is the cell inner membrane. It carries out the reaction N-terminal S-1,2-diacyl-sn-glyceryl-L-cysteinyl-[lipoprotein] + a glycerophospholipid = N-acyl-S-1,2-diacyl-sn-glyceryl-L-cysteinyl-[lipoprotein] + a 2-acyl-sn-glycero-3-phospholipid + H(+). It functions in the pathway protein modification; lipoprotein biosynthesis (N-acyl transfer). Functionally, catalyzes the phospholipid dependent N-acylation of the N-terminal cysteine of apolipoprotein, the last step in lipoprotein maturation. This Rickettsia typhi (strain ATCC VR-144 / Wilmington) protein is Apolipoprotein N-acyltransferase.